Here is a 118-residue protein sequence, read N- to C-terminus: UPF0102 protein CHY_1414 (118 aa).

It belongs to the UPF0102 family.

In Carboxydothermus hydrogenoformans (strain ATCC BAA-161 / DSM 6008 / Z-2901), this protein is UPF0102 protein CHY_1414.